A 291-amino-acid chain; its full sequence is Protease HtpX homolog (291 aa).

Transmembrane regions (helical) follow at residues 4–24 (ILLF…VASL) and 39–59 (GSLL…SLLI). His144 serves as a coordination point for Zn(2+). Residue Glu145 is part of the active site. A Zn(2+)-binding site is contributed by His148. 2 helical membrane-spanning segments follow: residues 159–179 (LIQG…AFAI) and 199–219 (ITTV…VAWF). Glu224 lines the Zn(2+) pocket.

This sequence belongs to the peptidase M48B family. The cofactor is Zn(2+).

Its subcellular location is the cell inner membrane. The protein is Protease HtpX homolog of Albidiferax ferrireducens (strain ATCC BAA-621 / DSM 15236 / T118) (Rhodoferax ferrireducens).